A 278-amino-acid polypeptide reads, in one-letter code: Orotidine 5'-phosphate decarboxylase (278 aa).

Lysine 95 (proton donor) is an active-site residue.

The protein belongs to the OMP decarboxylase family. Type 2 subfamily.

It catalyses the reaction orotidine 5'-phosphate + H(+) = UMP + CO2. The protein operates within pyrimidine metabolism; UMP biosynthesis via de novo pathway; UMP from orotate: step 2/2. The sequence is that of Orotidine 5'-phosphate decarboxylase from Methylibium petroleiphilum (strain ATCC BAA-1232 / LMG 22953 / PM1).